Here is a 514-residue protein sequence, read N- to C-terminus: 2,3-bisphosphoglycerate-independent phosphoglycerate mutase (514 aa).

2 residues coordinate Mn(2+): Asp-14 and Ser-64. The active-site Phosphoserine intermediate is the Ser-64. Residues His-125, 155–156, Arg-187, Arg-193, 263–266, and Lys-336 each bind substrate; these read RD and RADR. Mn(2+) is bound by residues Asp-403, His-407, Asp-444, His-445, and His-463.

This sequence belongs to the BPG-independent phosphoglycerate mutase family. As to quaternary structure, monomer. It depends on Mn(2+) as a cofactor.

The catalysed reaction is (2R)-2-phosphoglycerate = (2R)-3-phosphoglycerate. It participates in carbohydrate degradation; glycolysis; pyruvate from D-glyceraldehyde 3-phosphate: step 3/5. Its function is as follows. Catalyzes the interconversion of 2-phosphoglycerate and 3-phosphoglycerate. The sequence is that of 2,3-bisphosphoglycerate-independent phosphoglycerate mutase from Shewanella sediminis (strain HAW-EB3).